The primary structure comprises 464 residues: 3-isopropylmalate dehydratase large subunit (464 aa).

[4Fe-4S] cluster contacts are provided by Cys-337, Cys-397, and Cys-400.

It belongs to the aconitase/IPM isomerase family. LeuC type 1 subfamily. Heterodimer of LeuC and LeuD. It depends on [4Fe-4S] cluster as a cofactor.

The catalysed reaction is (2R,3S)-3-isopropylmalate = (2S)-2-isopropylmalate. Its pathway is amino-acid biosynthesis; L-leucine biosynthesis; L-leucine from 3-methyl-2-oxobutanoate: step 2/4. Functionally, catalyzes the isomerization between 2-isopropylmalate and 3-isopropylmalate, via the formation of 2-isopropylmaleate. This Bacillus anthracis (strain A0248) protein is 3-isopropylmalate dehydratase large subunit.